The sequence spans 349 residues: N-acetyltaurine hydrolase (349 aa).

Residues His26, His28, Glu169, His201, His230, and Asp298 each contribute to the a divalent metal cation site.

Belongs to the metallo-dependent hydrolases superfamily. Phosphotriesterase family. It depends on a divalent metal cation as a cofactor.

The protein localises to the cytoplasm. Its subcellular location is the cytosol. It carries out the reaction N-acetyltaurine + H2O = taurine + acetate. The catalysed reaction is N-propanoyltaurine + H2O = propanoate + taurine. It catalyses the reaction N-acetyl-L-methionine + H2O = L-methionine + acetate. The enzyme catalyses N-acetyl-L-isoleucine + H2O = L-isoleucine + acetate. It carries out the reaction N-acetyl-L-leucine + H2O = L-leucine + acetate. The catalysed reaction is N-acetyl-L-valine + H2O = L-valine + acetate. Functionally, N-acetyltaurine hydrolase that catalyzes the hydrolysis of N-acetyltaurine into taurine and acetate. PTER also acts on other N-acetyl amino acids (Met, Ile, Leu, Val) and N-propionyltaurine, but at lower rates. The sequence is that of N-acetyltaurine hydrolase (pter) from Salmo salar (Atlantic salmon).